Consider the following 232-residue polypeptide: Enolase-phosphatase E1 (232 aa).

This sequence belongs to the HAD-like hydrolase superfamily. MasA/MtnC family. As to quaternary structure, monomer. It depends on Mg(2+) as a cofactor.

It carries out the reaction 5-methylsulfanyl-2,3-dioxopentyl phosphate + H2O = 1,2-dihydroxy-5-(methylsulfanyl)pent-1-en-3-one + phosphate. The protein operates within amino-acid biosynthesis; L-methionine biosynthesis via salvage pathway; L-methionine from S-methyl-5-thio-alpha-D-ribose 1-phosphate: step 3/6. Its pathway is amino-acid biosynthesis; L-methionine biosynthesis via salvage pathway; L-methionine from S-methyl-5-thio-alpha-D-ribose 1-phosphate: step 4/6. In terms of biological role, bifunctional enzyme that catalyzes the enolization of 2,3-diketo-5-methylthiopentyl-1-phosphate (DK-MTP-1-P) into the intermediate 2-hydroxy-3-keto-5-methylthiopentenyl-1-phosphate (HK-MTPenyl-1-P), which is then dephosphorylated to form the acireductone 1,2-dihydroxy-3-keto-5-methylthiopentene (DHK-MTPene). The protein is Enolase-phosphatase E1 of Nocardia farcinica (strain IFM 10152).